A 748-amino-acid polypeptide reads, in one-letter code: Acyl-coenzyme A oxidase (748 aa).

The protein belongs to the acyl-CoA oxidase family. FAD serves as cofactor.

The protein resides in the peroxisome. It carries out the reaction a 2,3-saturated acyl-CoA + O2 = a (2E)-enoyl-CoA + H2O2. It functions in the pathway lipid metabolism; peroxisomal fatty acid beta-oxidation. This Candida glabrata (strain ATCC 2001 / BCRC 20586 / JCM 3761 / NBRC 0622 / NRRL Y-65 / CBS 138) (Yeast) protein is Acyl-coenzyme A oxidase (POX1).